The chain runs to 180 residues: Insulin-like growth factor 2 (180 aa).

Residues 1–24 (MGIPVGKSMLVLLISLAFALCCIA) form the signal peptide. Positions 25-52 (AYGPGETLCGGELVDTLQFVCSDRGFYF) are b. Intrachain disulfides connect Cys33–Cys71, Cys45–Cys84, and Cys70–Cys75. The tract at residues 53–64 (SRPSSRANRRSR) is c. The a stretch occupies residues 65-85 (GIVEECCFRSCDLALLETYCA). Residues 86 to 91 (TPAKSE) are d. A propeptide spans 92–180 (RDVSTSQAVL…ASSEMSSNHQ (89 aa)) (e peptide). A disordered region spans residues 157 to 180 (PLIVLPPKDPAHGGASSEMSSNHQ).

This sequence belongs to the insulin family. Interacts with MYORG; this interaction is required for IGF2 secretion. Interacts with integrins ITGAV:ITGB3 and ITGA6:ITGB4; integrin-binding is required for IGF2 signaling. Interacts with IGFBP2. In terms of processing, proteolytically processed by PCSK4, proIGF2 is cleaved at Arg-128 and Arg-92 to generate big-IGF2 and mature IGF2. Expressed in the heart, blood serum, kidney and skeletal muscle including the tibialis anterior muscle.

Its subcellular location is the secreted. The insulin-like growth factors possess growth-promoting activity. Major fetal growth hormone in mammals. Plays a key role in regulating fetoplacental development. IGF2 is influenced by placental lactogen. Also involved in tissue differentiation. In adults, involved in glucose metabolism in adipose tissue, skeletal muscle and liver. Acts as a ligand for integrin which is required for IGF2 signaling. Positively regulates myogenic transcription factor MYOD1 function by facilitating the recruitment of transcriptional coactivators, thereby controlling muscle terminal differentiation. Inhibits myoblast differentiation and modulates metabolism via increasing the mitochondrial respiration rate. Its function is as follows. Preptin undergoes glucose-mediated co-secretion with insulin, and acts as a physiological amplifier of glucose-mediated insulin secretion. Exhibits osteogenic properties by increasing osteoblast mitogenic activity through phosphoactivation of MAPK1 and MAPK3. This is Insulin-like growth factor 2 from Mus musculus (Mouse).